Reading from the N-terminus, the 758-residue chain is 5-methyltetrahydropteroyltriglutamate--homocysteine methyltransferase (758 aa).

Residues 16–19 (RELK) and Lys112 contribute to the 5-methyltetrahydropteroyltri-L-glutamate site. Residues 433–435 (IGS) and Glu486 each bind L-homocysteine. L-methionine is bound by residues 433–435 (IGS) and Glu486. Residues 517 to 518 (RC) and Trp563 contribute to the 5-methyltetrahydropteroyltri-L-glutamate site. Asp601 serves as a coordination point for L-homocysteine. Residue Asp601 coordinates L-methionine. Glu607 contributes to the 5-methyltetrahydropteroyltri-L-glutamate binding site. Residues His643, Cys645, and Glu667 each contribute to the Zn(2+) site. His696 functions as the Proton donor in the catalytic mechanism. Cys728 lines the Zn(2+) pocket.

Belongs to the vitamin-B12 independent methionine synthase family. The cofactor is Zn(2+).

The catalysed reaction is 5-methyltetrahydropteroyltri-L-glutamate + L-homocysteine = tetrahydropteroyltri-L-glutamate + L-methionine. It functions in the pathway amino-acid biosynthesis; L-methionine biosynthesis via de novo pathway; L-methionine from L-homocysteine (MetE route): step 1/1. Catalyzes the transfer of a methyl group from 5-methyltetrahydrofolate to homocysteine resulting in methionine formation. This chain is 5-methyltetrahydropteroyltriglutamate--homocysteine methyltransferase, found in Neisseria meningitidis serogroup A / serotype 4A (strain DSM 15465 / Z2491).